Reading from the N-terminus, the 59-residue chain is MLPPLPDFSLSVEQQFDLQKYRQQVRDISREDLEDLFIEVVRQKMAHENIFKGMIRQGS.

It to chloroplast ycf18.

Involved in phycobilisome (PBS) degradation during nutrient deprivation. May mark the PBS for degradation by covalent association with PBS components or may disrupt the PBS via ionic interactions. In Synechococcus elongatus (strain ATCC 33912 / PCC 7942 / FACHB-805) (Anacystis nidulans R2), this protein is Phycobilisome degradation protein NblA.